A 329-amino-acid polypeptide reads, in one-letter code: Small ribosomal subunit protein uS2 (329 aa).

The protein belongs to the universal ribosomal protein uS2 family.

This chain is Small ribosomal subunit protein uS2, found in Bradyrhizobium sp. (strain ORS 278).